A 107-amino-acid polypeptide reads, in one-letter code: Conantokin-R (107 aa).

The first 24 residues, 1–24, serve as a signal peptide directing secretion; the sequence is MQLYTYLYLLVSLVTFYLILGTGT. A propeptide spanning residues 25 to 80 is cleaved from the precursor; sequence LGHGGALTERRSTDATALKPEPVLLQKSSARSTDDNGNDRLTQMKRILKKRGNKAR. The interval 26–64 is disordered; sequence GHGGALTERRSTDATALKPEPVLLQKSSARSTDDNGNDR. 4-carboxyglutamate is present on residues Glu83, Glu84, Glu91, and Glu95. A divalent metal cation is bound by residues Glu91 and Glu95. Residues Cys101 and Cys105 are joined by a disulfide bond.

Belongs to the conotoxin B superfamily. It depends on Ca(2+) as a cofactor. Mg(2+) is required as a cofactor. In terms of tissue distribution, expressed by the venom duct.

It is found in the secreted. Its function is as follows. Conantokins inhibit N-methyl-D-aspartate (NMDA) receptors. This toxin is potent in the following order of preference: NR2B approximately NR2A/GRIN2A &gt; NR2C/GRIN2C &gt;&gt; NR2D/GRIN2D. Induces sleep-like symptoms in young mice. Is a highly potent anticonvulsant compound. The protein is Conantokin-R of Conus radiatus (Rayed cone).